The sequence spans 520 residues: Ribonuclease Y (520 aa).

A helical membrane pass occupies residues 4 to 24; that stretch reads TVWILISILLATVGAVVGFFV. The interval 86–116 is disordered; sequence KQENRLMQKEENLDRKDETLDKREQQLEKKE. A KH domain is found at 210-273; the sequence is TVSVVNLPND…ETARIALDKL (64 aa). The region spanning 336–429 is the HD domain; the sequence is VLKHSMEVAY…VAAADALSAA (94 aa).

Belongs to the RNase Y family.

The protein localises to the cell membrane. In terms of biological role, endoribonuclease that initiates mRNA decay. This Bacillus cereus (strain ATCC 10987 / NRS 248) protein is Ribonuclease Y.